The sequence spans 301 residues: Dimethylsulfoniopropionate lyase (301 aa).

Catalysis depends on proton donor/acceptor residues cysteine 111 and cysteine 230.

Belongs to the aspartate/glutamate racemases family. ALMA1 subfamily. In terms of assembly, homotetramer.

It carries out the reaction S,S-dimethyl-beta-propiothetin = acrylate + dimethyl sulfide + H(+). In terms of biological role, mediates cleavage of dimethylsulfoniopropionate (DMSP) into dimethyl sulfide (DMS) and acrylate. DMS is the principal form by which sulfur is transported from oceans to the atmosphere and is a key component of the ocean sulfur cycle. In Durusdinium sp. clade D (Symbiodinium sp. clade D), this protein is Dimethylsulfoniopropionate lyase.